The following is a 293-amino-acid chain: Elongation factor Ts (293 aa).

The involved in Mg(2+) ion dislocation from EF-Tu stretch occupies residues 81-84; the sequence is TDFV.

This sequence belongs to the EF-Ts family.

It localises to the cytoplasm. Associates with the EF-Tu.GDP complex and induces the exchange of GDP to GTP. It remains bound to the aminoacyl-tRNA.EF-Tu.GTP complex up to the GTP hydrolysis stage on the ribosome. The protein is Elongation factor Ts of Methylococcus capsulatus (strain ATCC 33009 / NCIMB 11132 / Bath).